The chain runs to 62 residues: Large ribosomal subunit protein uL29 (62 aa).

The protein belongs to the universal ribosomal protein uL29 family.

This Amoebophilus asiaticus (strain 5a2) protein is Large ribosomal subunit protein uL29.